Reading from the N-terminus, the 197-residue chain is Probable molybdenum cofactor guanylyltransferase (197 aa).

Residues 6–8 (LAG), Lys-18, Asp-65, and Asp-97 contribute to the GTP site. Asp-97 is a binding site for Mg(2+).

Belongs to the MobA family. Mg(2+) serves as cofactor.

The protein localises to the cytoplasm. It carries out the reaction Mo-molybdopterin + GTP + H(+) = Mo-molybdopterin guanine dinucleotide + diphosphate. Transfers a GMP moiety from GTP to Mo-molybdopterin (Mo-MPT) cofactor (Moco or molybdenum cofactor) to form Mo-molybdopterin guanine dinucleotide (Mo-MGD) cofactor. The chain is Probable molybdenum cofactor guanylyltransferase from Staphylococcus carnosus (strain TM300).